We begin with the raw amino-acid sequence, 528 residues long: Beta-hexosaminidase subunit alpha (528 aa).

Positions 1–22 (MAGCRLWVSLLLAAALACLATA) are cleaved as a signal peptide. A propeptide spanning residues 23–88 (LWPWPQYIQT…PRPSFSNKQQ (66 aa)) is cleaved from the precursor. A disulfide bridge connects residues Cys-58 and Cys-104. 3 N-linked (GlcNAc...) asparagine glycosylation sites follow: Asn-115, Asn-157, and Asn-295. A disulfide bridge connects residues Cys-277 and Cys-328. Glu-323 (proton donor) is an active-site residue. The segment at 422 to 423 (NR) is critical for hydrolysis GM2 gangliosides. N-linked (GlcNAc...) asparagine glycosylation occurs at Asn-487. Cys-504 and Cys-521 form a disulfide bridge.

This sequence belongs to the glycosyl hydrolase 20 family. There are 3 beta-hexosaminidase isozymes: isozyme A (hexosaminidase A) is a heterodimer composed of one subunit alpha and one subunit beta (chain A and B); isozyme B (hexosaminidase B) is a homodimer of two beta subunits (two chains A and B); isozyme S (hexosaminidase S) is a homodimer of two alpha subunits. The composition of the dimer (isozyme A versus isozyme S) has a significant effect on the substrate specificity of the alpha subunit active site. As to expression, ubiquitous. Most abundant in testis, adrenal, epididymis and heart. Low levels seen in the liver.

The protein localises to the lysosome. It catalyses the reaction Hydrolysis of terminal non-reducing N-acetyl-D-hexosamine residues in N-acetyl-beta-D-hexosaminides.. It carries out the reaction N-acetyl-beta-D-galactosaminyl-(1-&gt;4)-beta-D-3-sulfogalactosyl-(1-&gt;4)-beta-D-glucosyl-(1&lt;-&gt;1')-ceramide + H2O = a beta-D-3-sulfogalactosyl-(1-&gt;4)-beta-D-glucosyl-(1&lt;-&gt;1')-ceramide + N-acetyl-beta-D-galactosamine. The catalysed reaction is a ganglioside GM2 (d18:1(4E)) + H2O = a ganglioside GM3 (d18:1(4E)) + N-acetyl-beta-D-galactosamine. The enzyme catalyses a ganglioside GM2 + H2O = a ganglioside GM3 + N-acetyl-beta-D-galactosamine. It catalyses the reaction beta-D-GalNAc-(1-&gt;4)-alpha-L-IdoA-(1-&gt;3)-beta-D-GalNAc-4-sulfate-(1-&gt;4)-alpha-L-IdoA-(1-&gt;3)-D-GalNAc-4-sulfate + H2O = alpha-L-IdoA-(1-&gt;3)-beta-D-GalNAc-4-sulfate-(1-&gt;4)-alpha-L-IdoA-(1-&gt;3)-D-GalNAc-4-sulfate + N-acetyl-D-galactosamine. It carries out the reaction N-acetyl-beta-D-6-sulfogalactosaminyl-(1-&gt;4)-alpha-L-iduronyl-(1-&gt;3)-N-acetyl-D-6-sulfogalactosamine + H2O = alpha-L-iduronyl-(1-&gt;3)-N-acetyl-D-6-sulfogalactosamine + N-acetyl-D-6-sulfogalactosamine. Addition of GM2A stimulates the hydrolysis of sulfated glycosphingolipid SM2 and the ganglioside GM2. Hydrolyzes the non-reducing end N-acetyl-D-hexosamine and/or sulfated N-acetyl-D-hexosamine of glycoconjugates, such as the oligosaccharide moieties from proteins and neutral glycolipids, or from certain mucopolysaccharides. The isozyme S is as active as the isozyme A on the anionic bis-sulfated glycans, the chondroitin-6-sulfate trisaccharide (C6S-3), and the dermatan sulfate pentasaccharide, and the sulfated glycosphingolipid SM2. The isozyme B does not hydrolyze each of these substrates, however hydrolyzes efficiently neutral oligosaccharide. Only the isozyme A is responsible for the degradation of GM2 gangliosides in the presence of GM2A. In Mus musculus (Mouse), this protein is Beta-hexosaminidase subunit alpha.